We begin with the raw amino-acid sequence, 340 residues long: MVFSSVSSFLDPPINWPQSANPNNHPHHHQLQENGSLVSGHHQVLSHHFPQNPNPNHHHVETAAATTVDPSSLNGQAAERARLAKNSQPPEGALKCPRCDSANTKFCYFNNYNLTQPRHFCKACRRYWTRGGALRNVPVGGGCRRNKKGKSGNSKSSSSSQNKQSTSMVNATSPTNTSNVQLQTNSQFPFLPTLQNLTQLGGIGLNLAAINGNNGGNGNTSSSFLNDLGFFHGGNTSGPVMGNNNENNLMTSLGSSSHFALFDRTMGLYNFPNEVNMGLSSIGATRVSQTAQVKMEDNHLGNISRPVSGLTSPGNQSNQYWTGQGLPGSSSNDHHHQHLM.

Positions P12 to E33 are disordered. The Dof-type zinc finger occupies L94–K148. Residues C96, C99, C121, and C124 each coordinate Zn(2+). Disordered regions lie at residues P138–V180 and G301–M340. The segment covering S151 to S165 has biased composition (low complexity). Polar residues-rich tracts occupy residues T166 to V180 and G309 to S331.

The protein localises to the nucleus. Its function is as follows. Transcription factor that binds specifically to a 5'-AA[AG]G-3' consensus core sequence. The protein is Dof zinc finger protein DOF2.2 (DOF2.2) of Arabidopsis thaliana (Mouse-ear cress).